The sequence spans 359 residues: tRNA-specific 2-thiouridylase MnmA (359 aa).

Residues 10-17 (GISGGVDS) and Leu36 each bind ATP. Cys101 functions as the Nucleophile in the catalytic mechanism. An intrachain disulfide couples Cys101 to Cys197. Gly125 is a binding site for ATP. The interaction with tRNA stretch occupies residues 147–149 (KDQ). Cys197 (cysteine persulfide intermediate) is an active-site residue. Residues 306-307 (RY) are interaction with tRNA.

The protein belongs to the MnmA/TRMU family.

The protein resides in the cytoplasm. It catalyses the reaction S-sulfanyl-L-cysteinyl-[protein] + uridine(34) in tRNA + AH2 + ATP = 2-thiouridine(34) in tRNA + L-cysteinyl-[protein] + A + AMP + diphosphate + H(+). Functionally, catalyzes the 2-thiolation of uridine at the wobble position (U34) of tRNA, leading to the formation of s(2)U34. This is tRNA-specific 2-thiouridylase MnmA from Chlorobium chlorochromatii (strain CaD3).